Consider the following 164-residue polypeptide: Phosphopantetheine adenylyltransferase (164 aa).

Position 9 (serine 9) interacts with substrate. ATP is bound by residues 9–10 (SF) and histidine 17. Substrate is bound by residues lysine 41, leucine 73, and lysine 87. ATP-binding positions include 88–90 (GLR), glutamate 98, and 123–129 (YSYLSSS).

It belongs to the bacterial CoaD family. In terms of assembly, homohexamer. Mg(2+) is required as a cofactor.

It is found in the cytoplasm. The catalysed reaction is (R)-4'-phosphopantetheine + ATP + H(+) = 3'-dephospho-CoA + diphosphate. The protein operates within cofactor biosynthesis; coenzyme A biosynthesis; CoA from (R)-pantothenate: step 4/5. In terms of biological role, reversibly transfers an adenylyl group from ATP to 4'-phosphopantetheine, yielding dephospho-CoA (dPCoA) and pyrophosphate. This chain is Phosphopantetheine adenylyltransferase, found in Clostridium botulinum (strain Okra / Type B1).